Reading from the N-terminus, the 271-residue chain is Interleukin-1 alpha (271 aa).

Residues 1-112 constitute a propeptide that is removed on maturation; it reads MAKVPDMFED…DSEEEIIKPR (112 aa). Lys-82 bears the N6-acetyllysine mark. The segment at 82-86 is nuclear localization signal (NLS); the sequence is KKRRL. Ser-87 carries the phosphoserine modification. 2 N-linked (GlcNAc...) asparagine glycosylation sites follow: Asn-102 and Asn-141.

This sequence belongs to the IL-1 family. As to quaternary structure, monomer. Interacts with TMED10; the interaction mediates the translocation from the cytoplasm into the ERGIC (endoplasmic reticulum-Golgi intermediate compartment) and thereby secretion. Interacts with IL1R1. Interacts with S100A13; this interaction is the first step in the export of IL1A, followed by direct translocation of this complex across the plasma membrane. In terms of processing, acetylated within its nuclear localization sequence, which impacts subcellular localization. Post-translationally, proteolytic processed by CAPN1 in a calcium-dependent manner. Cleavage from 31 kDa precursor to 18 kDa biologically active molecules. Phosphorylated. Phosphorylation greatly enhances susceptibility to digestion and promotes the conversion of pre-IL1A alpha to the biologically active IL1A.

The protein localises to the nucleus. It is found in the cytoplasm. The protein resides in the secreted. Cytokine constitutively present intracellularly in nearly all resting non-hematopoietic cells that plays an important role in inflammation and bridges the innate and adaptive immune systems. After binding to its receptor IL1R1 together with its accessory protein IL1RAP, forms the high affinity interleukin-1 receptor complex. Signaling involves the recruitment of adapter molecules such as MYD88, IRAK1 or IRAK4. In turn, mediates the activation of NF-kappa-B and the three MAPK pathways p38, p42/p44 and JNK pathways. Within the cell, acts as an alarmin and cell death results in its liberation in the extracellular space after disruption of the cell membrane to induce inflammation and alert the host to injury or damage. In addition to its role as a danger signal, which occurs when the cytokine is passively released by cell necrosis, directly senses DNA damage and acts as signal for genotoxic stress without loss of cell integrity. This Cercocebus atys (Sooty mangabey) protein is Interleukin-1 alpha (IL1A).